Here is a 371-residue protein sequence, read N- to C-terminus: N-acetyldiaminopimelate deacetylase (371 aa).

Residue D68 is part of the active site. E127 acts as the Proton acceptor in catalysis.

Belongs to the peptidase M20A family. N-acetyldiaminopimelate deacetylase subfamily.

It catalyses the reaction N-acetyl-(2S,6S)-2,6-diaminopimelate + H2O = (2S,6S)-2,6-diaminopimelate + acetate. The protein operates within amino-acid biosynthesis; L-lysine biosynthesis via DAP pathway; LL-2,6-diaminopimelate from (S)-tetrahydrodipicolinate (acetylase route): step 3/3. Catalyzes the conversion of N-acetyl-diaminopimelate to diaminopimelate and acetate. The sequence is that of N-acetyldiaminopimelate deacetylase from Oceanobacillus iheyensis (strain DSM 14371 / CIP 107618 / JCM 11309 / KCTC 3954 / HTE831).